The chain runs to 306 residues: tRNA pseudouridine synthase B (306 aa).

Aspartate 43 acts as the Nucleophile in catalysis.

The protein belongs to the pseudouridine synthase TruB family. Type 1 subfamily.

The catalysed reaction is uridine(55) in tRNA = pseudouridine(55) in tRNA. Functionally, responsible for synthesis of pseudouridine from uracil-55 in the psi GC loop of transfer RNAs. The sequence is that of tRNA pseudouridine synthase B from Syntrophobacter fumaroxidans (strain DSM 10017 / MPOB).